The primary structure comprises 844 residues: Saxiphilin (844 aa).

Residues 1 to 19 (MAPTFQTALFFTIISLSFA) form the signal peptide. The Transferrin-like 1; first part domain maps to 26-106 (VRWCAISDLE…IAEPYSSNRD (81 aa)). 19 disulfide bridges follow: C29–C64, C39–C55, C110–C130, C141–C148, C150–C172, C180–C202, C222–C244, C277–C360, C322–C335, C332–C343, C388–C402, C495–C527, C505–C518, C552–C839, C570–C799, C607–C685, C641–C655, C652–C668, and C725–C739. 2 Thyroglobulin type-1 domains span residues 107-172 (LQKC…RATC) and 177-244 (LPKC…PATC). An absent in transferrins region spans residues 109–249 (KCLKERQQAL…IPATCQKHDL (141 aa)). Positions 245 to 482 (QKHDLVTTCH…LFHAMKALTG (238 aa)) constitute a Transferrin-like 1; second part domain. Residues 492–828 (VRWCTINKLE…YYTTVYGASR (337 aa)) enclose the Transferrin-like 2 domain.

It belongs to the transferrin family. In terms of assembly, monomer. As to expression, plasma. Highest levels of transcripts found in the liver, the lung, the pancreas and the brain.

Its subcellular location is the secreted. In terms of biological role, binds specifically to the neurotoxin saxitoxin. Its physiological role may be to transport or sequester an endogenous organic molecule other than Fe(3+). It may participate in a detoxification mechanism for neutralizing a microbial toxin. This is Saxiphilin from Aquarana catesbeiana (American bullfrog).